The sequence spans 388 residues: Quinolone resistance protein NorA (388 aa).

Transmembrane regions (helical) follow at residues 5 to 25 (IFVL…VIPV), 42 to 62 (LLVA…GTLA), 69 to 89 (LIIC…AVGH), 99 to 119 (VIGG…IADI), 129 to 149 (FGYM…IGGF), 157 to 177 (MPFY…IVLI), 201 to 221 (WKVF…LSAF), 239 to 259 (DISI…IYFF), 269 to 289 (LTFI…LVFA), 293 to 313 (WSIM…RPAI), 331 to 351 (LNST…GALF), and 355 to 375 (IEAP…IVLI).

This sequence belongs to the major facilitator superfamily. TCR/Tet family.

The protein localises to the cell membrane. Its function is as follows. Involved in quinolone resistance. May constitute a membrane-associated active efflux pump of hydrophilic quinolones. This is Quinolone resistance protein NorA (norA) from Staphylococcus aureus (strain Mu50 / ATCC 700699).